We begin with the raw amino-acid sequence, 462 residues long: Glycogen synthase 1 (462 aa).

Arg6 lines the ADP-alpha-D-glucose pocket.

It belongs to the glycosyltransferase 1 family. Bacterial/plant glycogen synthase subfamily.

It catalyses the reaction [(1-&gt;4)-alpha-D-glucosyl](n) + ADP-alpha-D-glucose = [(1-&gt;4)-alpha-D-glucosyl](n+1) + ADP + H(+). Its pathway is glycan biosynthesis; glycogen biosynthesis. Synthesizes alpha-1,4-glucan chains using ADP-glucose. This Bradyrhizobium diazoefficiens (strain JCM 10833 / BCRC 13528 / IAM 13628 / NBRC 14792 / USDA 110) protein is Glycogen synthase 1.